A 274-amino-acid chain; its full sequence is Mitochondrial outer membrane protein porin 3 (274 aa).

At Ser76 the chain carries Phosphoserine.

It belongs to the eukaryotic mitochondrial porin (TC 1.B.8.1) family. As to quaternary structure, interacts with KIN14F/KP1. Interacts with FBA6 and GAPC1. In terms of tissue distribution, expressed in leaf tips, anthers and stigma.

It localises to the cell membrane. Its subcellular location is the mitochondrion outer membrane. Functionally, forms a channel through the mitochondrial outer membrane that allows diffusion of small hydrophilic molecules. The channel adopts an open conformation at low or zero membrane potential and a closed conformation at potentials above 30-40 mV. The open state has a weak anion selectivity whereas the closed state is cation-selective. The polypeptide is Mitochondrial outer membrane protein porin 3 (VDAC3) (Arabidopsis thaliana (Mouse-ear cress)).